A 632-amino-acid chain; its full sequence is Probable potassium transport system protein Kup 1 (632 aa).

12 helical membrane-spanning segments follow: residues 17–37 (LFYL…TSPL), 60–80 (LISL…VLFL), 106–126 (TALL…DAMI), 144–164 (PSLA…LFVV), 175–195 (FFGP…ISHI), 210–230 (AVSF…AVFL), 254–274 (WFLL…ALVL), 292–312 (ALLP…QAVI), 344–364 (IFLP…VLSF), 370–390 (LATA…IMAF), 401–421 (LPVA…FLGA), and 426–446 (IHDG…VMWT).

The protein belongs to the HAK/KUP transporter (TC 2.A.72) family.

The protein resides in the cell inner membrane. The catalysed reaction is K(+)(in) + H(+)(in) = K(+)(out) + H(+)(out). Functionally, transport of potassium into the cell. Likely operates as a K(+):H(+) symporter. In Rhizobium etli (strain ATCC 51251 / DSM 11541 / JCM 21823 / NBRC 15573 / CFN 42), this protein is Probable potassium transport system protein Kup 1.